The chain runs to 148 residues: SsrA-binding protein (148 aa).

Positions 129–142 (ETEKKRDWEREKAR) are enriched in basic and acidic residues. The segment at 129-148 (ETEKKRDWEREKARIMRAGT) is disordered.

The protein belongs to the SmpB family.

The protein localises to the cytoplasm. Functionally, required for rescue of stalled ribosomes mediated by trans-translation. Binds to transfer-messenger RNA (tmRNA), required for stable association of tmRNA with ribosomes. tmRNA and SmpB together mimic tRNA shape, replacing the anticodon stem-loop with SmpB. tmRNA is encoded by the ssrA gene; the 2 termini fold to resemble tRNA(Ala) and it encodes a 'tag peptide', a short internal open reading frame. During trans-translation Ala-aminoacylated tmRNA acts like a tRNA, entering the A-site of stalled ribosomes, displacing the stalled mRNA. The ribosome then switches to translate the ORF on the tmRNA; the nascent peptide is terminated with the 'tag peptide' encoded by the tmRNA and targeted for degradation. The ribosome is freed to recommence translation, which seems to be the essential function of trans-translation. The polypeptide is SsrA-binding protein (Burkholderia lata (strain ATCC 17760 / DSM 23089 / LMG 22485 / NCIMB 9086 / R18194 / 383)).